A 710-amino-acid chain; its full sequence is Polyribonucleotide nucleotidyltransferase (710 aa).

Positions 488 and 494 each coordinate Mg(2+). The 61-residue stretch at 555–615 (PVIKVISIDP…EKVDAAIEQI (61 aa)) folds into the KH domain. Residues 625–688 (GDVFSGKVTR…NLGRLQLEEF (64 aa)) form the S1 motif domain. Positions 688–710 (FSDSPDHKHGEKRSFKRHRKNDN) are disordered. Residues 691–700 (SPDHKHGEKR) show a composition bias toward basic and acidic residues. Residues 701–710 (SFKRHRKNDN) are compositionally biased toward basic residues.

The protein belongs to the polyribonucleotide nucleotidyltransferase family. It depends on Mg(2+) as a cofactor.

The protein localises to the cytoplasm. It catalyses the reaction RNA(n+1) + phosphate = RNA(n) + a ribonucleoside 5'-diphosphate. In terms of biological role, involved in mRNA degradation. Catalyzes the phosphorolysis of single-stranded polyribonucleotides processively in the 3'- to 5'-direction. This is Polyribonucleotide nucleotidyltransferase from Pseudothermotoga lettingae (strain ATCC BAA-301 / DSM 14385 / NBRC 107922 / TMO) (Thermotoga lettingae).